Here is a 287-residue protein sequence, read N- to C-terminus: ATP synthase gamma chain (287 aa).

This sequence belongs to the ATPase gamma chain family. In terms of assembly, F-type ATPases have 2 components, CF(1) - the catalytic core - and CF(0) - the membrane proton channel. CF(1) has five subunits: alpha(3), beta(3), gamma(1), delta(1), epsilon(1). CF(0) has three main subunits: a, b and c.

The protein resides in the cell inner membrane. Produces ATP from ADP in the presence of a proton gradient across the membrane. The gamma chain is believed to be important in regulating ATPase activity and the flow of protons through the CF(0) complex. The polypeptide is ATP synthase gamma chain (Xylella fastidiosa (strain 9a5c)).